We begin with the raw amino-acid sequence, 512 residues long: 2-isopropylmalate synthase (512 aa).

Positions 5–268 constitute a Pyruvate carboxyltransferase domain; that stretch reads LIIFDTTLRD…DVDIETQHIL (264 aa). Residues D14, H202, H204, and N239 each coordinate Mn(2+). Positions 394–512 are regulatory domain; that stretch reads SFVSLSQHSE…SKADRVAAQG (119 aa).

It belongs to the alpha-IPM synthase/homocitrate synthase family. LeuA type 1 subfamily. Homodimer. It depends on Mn(2+) as a cofactor.

It is found in the cytoplasm. The enzyme catalyses 3-methyl-2-oxobutanoate + acetyl-CoA + H2O = (2S)-2-isopropylmalate + CoA + H(+). Its pathway is amino-acid biosynthesis; L-leucine biosynthesis; L-leucine from 3-methyl-2-oxobutanoate: step 1/4. In terms of biological role, catalyzes the condensation of the acetyl group of acetyl-CoA with 3-methyl-2-oxobutanoate (2-ketoisovalerate) to form 3-carboxy-3-hydroxy-4-methylpentanoate (2-isopropylmalate). The protein is 2-isopropylmalate synthase of Albidiferax ferrireducens (strain ATCC BAA-621 / DSM 15236 / T118) (Rhodoferax ferrireducens).